The following is a 293-amino-acid chain: 4-hydroxy-tetrahydrodipicolinate synthase (293 aa).

Thr-45 contacts pyruvate. Catalysis depends on Tyr-133, which acts as the Proton donor/acceptor. The active-site Schiff-base intermediate with substrate is the Lys-161. Ile-204 contacts pyruvate.

This sequence belongs to the DapA family. As to quaternary structure, homotetramer; dimer of dimers.

Its subcellular location is the cytoplasm. The enzyme catalyses L-aspartate 4-semialdehyde + pyruvate = (2S,4S)-4-hydroxy-2,3,4,5-tetrahydrodipicolinate + H2O + H(+). The protein operates within amino-acid biosynthesis; L-lysine biosynthesis via DAP pathway; (S)-tetrahydrodipicolinate from L-aspartate: step 3/4. Catalyzes the condensation of (S)-aspartate-beta-semialdehyde [(S)-ASA] and pyruvate to 4-hydroxy-tetrahydrodipicolinate (HTPA). This chain is 4-hydroxy-tetrahydrodipicolinate synthase, found in Yersinia pseudotuberculosis serotype O:1b (strain IP 31758).